Consider the following 407-residue polypeptide: Na(+)-translocating NADH-quinone reductase subunit F (407 aa).

The helical transmembrane segment at 3–23 (IILGVVMFTLIVLALVLVILF) threads the bilayer. A 2Fe-2S ferredoxin-type domain is found at 32-126 (GDITISINGD…DMDIELPEEI (95 aa)). Residues Cys69, Cys75, Cys78, and Cys110 each coordinate [2Fe-2S] cluster. In terms of domain architecture, FAD-binding FR-type spans 129-269 (VKKWECTVIS…SGPFGEFFAK (141 aa)). The segment at 272 to 389 (DAEMVFIGGG…PMMNAAVIGM (118 aa)) is catalytic.

The protein belongs to the NqrF family. Composed of six subunits; NqrA, NqrB, NqrC, NqrD, NqrE and NqrF. The cofactor is [2Fe-2S] cluster. FAD serves as cofactor.

The protein resides in the cell inner membrane. It catalyses the reaction a ubiquinone + n Na(+)(in) + NADH + H(+) = a ubiquinol + n Na(+)(out) + NAD(+). NQR complex catalyzes the reduction of ubiquinone-1 to ubiquinol by two successive reactions, coupled with the transport of Na(+) ions from the cytoplasm to the periplasm. The first step is catalyzed by NqrF, which accepts electrons from NADH and reduces ubiquinone-1 to ubisemiquinone by a one-electron transfer pathway. The sequence is that of Na(+)-translocating NADH-quinone reductase subunit F from Vibrio vulnificus (strain CMCP6).